Reading from the N-terminus, the 113-residue chain is Nucleoid-associated protein Synpcc7942_0464 (113 aa).

It belongs to the YbaB/EbfC family. In terms of assembly, homodimer.

Its subcellular location is the cytoplasm. It localises to the nucleoid. In terms of biological role, binds to DNA and alters its conformation. May be involved in regulation of gene expression, nucleoid organization and DNA protection. This chain is Nucleoid-associated protein Synpcc7942_0464, found in Synechococcus elongatus (strain ATCC 33912 / PCC 7942 / FACHB-805) (Anacystis nidulans R2).